A 397-amino-acid polypeptide reads, in one-letter code: Mannosylglycerate synthase (397 aa).

GDP-alpha-D-mannose-binding positions include 7–11, Ile-35, Gln-66, Lys-76, Asp-100, and 100–101; these read PFKHE and DA. Asp-102 contacts a divalent metal cation. (R)-glycerate-binding positions include Arg-131 and 136–139; that span reads AMIT. GDP-alpha-D-mannose is bound by residues Leu-163 and Asp-192. Residue His-217 participates in a divalent metal cation binding. GDP-alpha-D-mannose-binding residues include Arg-218 and Tyr-220.

The protein belongs to the glycosyltransferase 78 family. In terms of assembly, homotetramer. Dimer of dimers. Mg(2+) is required as a cofactor. The cofactor is Ca(2+). Mn(2+) serves as cofactor. It depends on Ni(2+) as a cofactor. Requires Co(2+) as cofactor.

It carries out the reaction (R)-glycerate + GDP-alpha-D-mannose = (2R)-2-O-(alpha-D-mannosyl)-glycerate + GDP + H(+). Its activity is regulated as follows. Inhibited by GDP. Functionally, involved in the biosynthesis of the stress protectant 2-O-alpha-D-mannosyl glycerate (MG) which is produced in response to growth at supraoptimal temperature and salinity, and protects several enzymes against inactivation by temperature, freeze-drying and osmotic stress. Catalyzes the condensation of alpha-GDP-D-mannose (GDP-Man) with D-glycerate to produce alpha-mannosyl-D-glycerate. It is specific for GDP-Man, but it can also use alpha-GDP-D-glucose (GDP-Glc), beta-GDP-D-fructose, alpha-UDP-D-mannose and alpha-UDP-D-glucose as sugar donors. It is specific for D-glycerate, but it can also use D-lactate and glycolate as sugar acceptors. This reaction occurs with a net retention of anomeric configuration; the newly formed glycosidic linkage has the same alpha configuration as the sugar donor. In Rhodothermus marinus (Rhodothermus obamensis), this protein is Mannosylglycerate synthase (mgs).